The chain runs to 208 residues: FMN-dependent NADH:quinone oxidoreductase 4 (208 aa).

The protein belongs to the azoreductase type 1 family. As to quaternary structure, homodimer. FMN serves as cofactor.

It catalyses the reaction 2 a quinone + NADH + H(+) = 2 a 1,4-benzosemiquinone + NAD(+). The enzyme catalyses N,N-dimethyl-1,4-phenylenediamine + anthranilate + 2 NAD(+) = 2-(4-dimethylaminophenyl)diazenylbenzoate + 2 NADH + 2 H(+). In terms of biological role, quinone reductase that provides resistance to thiol-specific stress caused by electrophilic quinones. Functionally, also exhibits azoreductase activity. Catalyzes the reductive cleavage of the azo bond in aromatic azo compounds to the corresponding amines. The polypeptide is FMN-dependent NADH:quinone oxidoreductase 4 (Bacillus anthracis).